Consider the following 202-residue polypeptide: FMN-dependent NADH:quinone oxidoreductase (202 aa).

FMN-binding positions include serine 10, serine 16–serine 18, and methionine 96–phenylalanine 99.

This sequence belongs to the azoreductase type 1 family. As to quaternary structure, homodimer. FMN serves as cofactor.

It carries out the reaction 2 a quinone + NADH + H(+) = 2 a 1,4-benzosemiquinone + NAD(+). The enzyme catalyses N,N-dimethyl-1,4-phenylenediamine + anthranilate + 2 NAD(+) = 2-(4-dimethylaminophenyl)diazenylbenzoate + 2 NADH + 2 H(+). Its function is as follows. Quinone reductase that provides resistance to thiol-specific stress caused by electrophilic quinones. Functionally, also exhibits azoreductase activity. Catalyzes the reductive cleavage of the azo bond in aromatic azo compounds to the corresponding amines. In Hydrogenovibrio crunogenus (strain DSM 25203 / XCL-2) (Thiomicrospira crunogena), this protein is FMN-dependent NADH:quinone oxidoreductase.